Here is a 337-residue protein sequence, read N- to C-terminus: Lipopolysaccharide 1,3-galactosyltransferase (337 aa).

Residues 33-38 (GIDKNF) and 130-131 (DA) each bind UDP. Residues Asp-130 and Asp-132 each coordinate Mg(2+). Short sequence motifs (DXD) lie at residues 130–132 (DAD) and 219–221 (DQD). A Mg(2+)-binding site is contributed by His-264. 264 to 270 (HYIGPTK) provides a ligand contact to UDP.

It belongs to the glycosyltransferase 8 family. Mg(2+) serves as cofactor.

The catalysed reaction is UDP-alpha-D-galactose + [lipopolysaccharide] = UDP + 3-alpha-D-galactosyl-[lipopolysaccharide].. It participates in bacterial outer membrane biogenesis; LPS core biosynthesis. Inhibited in a competitive manner by closely related nonsubstrate lipopolysaccharides. Functionally, galactosyltransferase involved in the biosynthesis of the core oligosaccharide region of lipopolysaccharide (LPS). Catalyzes the addition of an alpha l,3-linked galactose (galactose I) to the first outer-core glucose (glucose I). Cannot use UDP-glucose. Activity probably does not require the branched galactose added by WaaB, but it is higher in the presence of this branched galactose. The chain is Lipopolysaccharide 1,3-galactosyltransferase from Salmonella typhimurium (strain LT2 / SGSC1412 / ATCC 700720).